The following is a 208-amino-acid chain: ATP-dependent Clp protease proteolytic subunit (208 aa).

The active-site Nucleophile is the S107. Residue H132 is part of the active site.

This sequence belongs to the peptidase S14 family. As to quaternary structure, fourteen ClpP subunits assemble into 2 heptameric rings which stack back to back to give a disk-like structure with a central cavity, resembling the structure of eukaryotic proteasomes.

It is found in the cytoplasm. The catalysed reaction is Hydrolysis of proteins to small peptides in the presence of ATP and magnesium. alpha-casein is the usual test substrate. In the absence of ATP, only oligopeptides shorter than five residues are hydrolyzed (such as succinyl-Leu-Tyr-|-NHMec, and Leu-Tyr-Leu-|-Tyr-Trp, in which cleavage of the -Tyr-|-Leu- and -Tyr-|-Trp bonds also occurs).. Cleaves peptides in various proteins in a process that requires ATP hydrolysis. Has a chymotrypsin-like activity. Plays a major role in the degradation of misfolded proteins. The chain is ATP-dependent Clp protease proteolytic subunit from Methylorubrum populi (strain ATCC BAA-705 / NCIMB 13946 / BJ001) (Methylobacterium populi).